A 147-amino-acid polypeptide reads, in one-letter code: MATPAQRLHLLPLLLLLCGECAQVCGCNETGMLERLPRCGKAFAEMMQKVDVWKWCNLSEFIVYYESFTNCTEMETNIVGCYWPNPLAQSFITGIHRQFFSNCTVDRTHWEDPPDEVLIPLIAVPVLLTVAMAGLVVWRSKRTDRLL.

The first 22 residues, 1–22 (MATPAQRLHLLPLLLLLCGECA), serve as a signal peptide directing secretion. At 23-112 (QVCGCNETGM…CTVDRTHWED (90 aa)) the chain is on the extracellular side. Residues N28, N57, N70, and N102 are each glycosylated (N-linked (GlcNAc...) asparagine). 2 cysteine pairs are disulfide-bonded: C39/C71 and C56/C103. The helical transmembrane segment at 113–137 (PPDEVLIPLIAVPVLLTVAMAGLVV) threads the bilayer. The Cytoplasmic segment spans residues 138-147 (WRSKRTDRLL).

This sequence belongs to the RAMP family. As to quaternary structure, heterodimer of CALCRL and RAMP3; interaction induces allosteric modulation of CALCRL function and ligand specificity for adrenomedullin/ADM and intermedin/ADM2. Heterodimer of CALCR and RAMP3; interaction form the receptor complex AMYR3 for amylin/IAPP. Interacts with GPER1.

The protein localises to the cell membrane. It is found in the membrane. Accessory protein that interacts with and modulates the function of G-protein coupled receptors including calcitonin gene-related peptide type 1 receptor (CALCRL), calcitonin receptor (CALCR) and G-protein coupled estrogen receptor 1 (GPER1). Required for the transport of CALCRL and GPER1 receptors to the plasma membrane. Plays a role in cardioprotection by reducing cardiac hypertrophy and perivascular fibrosis in a GPER1-dependent manner. Together with CALCRL, form a receptor complex for adrenomedullin/ADM and intermedin/ADM2. Together with CALCR, act as a receptor complex for amylin/IAPP. The sequence is that of Receptor activity-modifying protein 3 from Rattus norvegicus (Rat).